We begin with the raw amino-acid sequence, 564 residues long: ATP-dependent RNA helicase ROK1 (564 aa).

Disordered stretches follow at residues M1 to I45 and E62 to I87. 3 stretches are compositionally biased toward basic and acidic residues: residues V13–A23, D33–I45, and E62–L86. A Q motif motif is present at residues D122–C150. In terms of domain architecture, Helicase ATP-binding spans I153–V333. G166 to T173 is an ATP binding site. The DEAD box motif lies at D280–D283. Residues N344–A506 enclose the Helicase C-terminal domain. Residues E512 to K564 are disordered. Residues K553–K564 show a composition bias toward basic and acidic residues.

Belongs to the DEAD box helicase family. DDX52/ROK1 subfamily. As to quaternary structure, interacts with the U3 snoRNA and is associated with the 90S and 40S pre-ribosomes. This association requires the presence of RRP5. Also interacts with OSH3.

It is found in the nucleus. It localises to the nucleolus. It catalyses the reaction ATP + H2O = ADP + phosphate + H(+). ATP-dependent RNA helicase involved in 40S ribosomal subunit biogenesis. Required for the processing and cleavage of 35S pre-rRNA at sites A0, A1, and A2, leading to mature 18S rRNA. May also have a gene-specific regulatory function since it affects nuclear fusion by regulating KAR4 expression and contributes with KEM1 to ISP-1 sensitivity. In Saccharomyces cerevisiae (strain ATCC 204508 / S288c) (Baker's yeast), this protein is ATP-dependent RNA helicase ROK1 (ROK1).